Reading from the N-terminus, the 337-residue chain is Thiazole synthase (337 aa).

Positions 1-41 (MSQHPLRPAGSRPGDSPPDGSCPDGLAGGGSAVGGGGGGEA) are disordered. Residues 10 to 25 (GSRPGDSPPDGSCPDG) show a composition bias toward low complexity. Residues 26–41 (LAGGGSAVGGGGGGEA) show a composition bias toward gly residues. Lys-144 functions as the Schiff-base intermediate with DXP in the catalytic mechanism. 1-deoxy-D-xylulose 5-phosphate-binding positions include Gly-205, 231–232 (AG), and 253–254 (NT). A disordered region spans residues 302 to 337 (FLGAHPSPASHPSPASPVPSVSRATSPAAVVGEASR). The segment covering 319 to 337 (VPSVSRATSPAAVVGEASR) has biased composition (low complexity).

The protein belongs to the ThiG family. Homotetramer. Forms heterodimers with either ThiH or ThiS.

It localises to the cytoplasm. The enzyme catalyses [ThiS sulfur-carrier protein]-C-terminal-Gly-aminoethanethioate + 2-iminoacetate + 1-deoxy-D-xylulose 5-phosphate = [ThiS sulfur-carrier protein]-C-terminal Gly-Gly + 2-[(2R,5Z)-2-carboxy-4-methylthiazol-5(2H)-ylidene]ethyl phosphate + 2 H2O + H(+). The protein operates within cofactor biosynthesis; thiamine diphosphate biosynthesis. In terms of biological role, catalyzes the rearrangement of 1-deoxy-D-xylulose 5-phosphate (DXP) to produce the thiazole phosphate moiety of thiamine. Sulfur is provided by the thiocarboxylate moiety of the carrier protein ThiS. In vitro, sulfur can be provided by H(2)S. The protein is Thiazole synthase of Frankia casuarinae (strain DSM 45818 / CECT 9043 / HFP020203 / CcI3).